Here is a 572-residue protein sequence, read N- to C-terminus: Proline--tRNA ligase (572 aa).

Belongs to the class-II aminoacyl-tRNA synthetase family. ProS type 1 subfamily. In terms of assembly, homodimer.

The protein resides in the cytoplasm. The catalysed reaction is tRNA(Pro) + L-proline + ATP = L-prolyl-tRNA(Pro) + AMP + diphosphate. Functionally, catalyzes the attachment of proline to tRNA(Pro) in a two-step reaction: proline is first activated by ATP to form Pro-AMP and then transferred to the acceptor end of tRNA(Pro). As ProRS can inadvertently accommodate and process non-cognate amino acids such as alanine and cysteine, to avoid such errors it has two additional distinct editing activities against alanine. One activity is designated as 'pretransfer' editing and involves the tRNA(Pro)-independent hydrolysis of activated Ala-AMP. The other activity is designated 'posttransfer' editing and involves deacylation of mischarged Ala-tRNA(Pro). The misacylated Cys-tRNA(Pro) is not edited by ProRS. This is Proline--tRNA ligase from Yersinia pseudotuberculosis serotype IB (strain PB1/+).